Consider the following 243-residue polypeptide: Coproheme decarboxylase (243 aa).

Tyr-145 is an active-site residue. Position 168 (His-168) interacts with Fe-coproporphyrin III.

It belongs to the ChdC family. Type 2 subfamily. It depends on Fe-coproporphyrin III as a cofactor.

It carries out the reaction Fe-coproporphyrin III + 2 H2O2 + 2 H(+) = heme b + 2 CO2 + 4 H2O. The enzyme catalyses Fe-coproporphyrin III + H2O2 + H(+) = harderoheme III + CO2 + 2 H2O. The catalysed reaction is harderoheme III + H2O2 + H(+) = heme b + CO2 + 2 H2O. Its pathway is porphyrin-containing compound metabolism; protoheme biosynthesis. In terms of biological role, involved in coproporphyrin-dependent heme b biosynthesis. Catalyzes the decarboxylation of Fe-coproporphyrin III (coproheme) to heme b (protoheme IX), the last step of the pathway. The reaction occurs in a stepwise manner with a three-propionate intermediate. The sequence is that of Coproheme decarboxylase from Streptomyces coelicolor (strain ATCC BAA-471 / A3(2) / M145).